We begin with the raw amino-acid sequence, 201 residues long: Adenylyl-sulfate kinase (201 aa).

35–42 (GLSGSGKS) lines the ATP pocket. Serine 109 acts as the Phosphoserine intermediate in catalysis.

This sequence belongs to the APS kinase family.

The catalysed reaction is adenosine 5'-phosphosulfate + ATP = 3'-phosphoadenylyl sulfate + ADP + H(+). Its pathway is sulfur metabolism; hydrogen sulfide biosynthesis; sulfite from sulfate: step 2/3. In terms of biological role, catalyzes the synthesis of activated sulfate. The protein is Adenylyl-sulfate kinase of Erwinia tasmaniensis (strain DSM 17950 / CFBP 7177 / CIP 109463 / NCPPB 4357 / Et1/99).